Here is a 379-residue protein sequence, read N- to C-terminus: Glucose-1-phosphate adenylyltransferase (379 aa).

Alpha-D-glucose 1-phosphate is bound by residues Gly164, 179–180, and Ser190; that span reads EK.

Belongs to the bacterial/plant glucose-1-phosphate adenylyltransferase family. In terms of assembly, homotetramer.

The catalysed reaction is alpha-D-glucose 1-phosphate + ATP + H(+) = ADP-alpha-D-glucose + diphosphate. Its pathway is glycan biosynthesis; glycogen biosynthesis. Its function is as follows. Involved in the biosynthesis of ADP-glucose, a building block required for the elongation reactions to produce glycogen. Catalyzes the reaction between ATP and alpha-D-glucose 1-phosphate (G1P) to produce pyrophosphate and ADP-Glc. This Streptococcus uberis (strain ATCC BAA-854 / 0140J) protein is Glucose-1-phosphate adenylyltransferase.